The chain runs to 59 residues: Ribosome modulation factor (59 aa).

The protein belongs to the ribosome modulation factor family.

It localises to the cytoplasm. Its function is as follows. During stationary phase, converts 70S ribosomes to an inactive dimeric form (100S ribosomes). The protein is Ribosome modulation factor of Aeromonas veronii (strain B565).